The sequence spans 236 residues: Ribose-5-phosphate isomerase A (236 aa).

Residues Thr33–Thr36, Asp90–Asp93, and Lys103–Gly106 contribute to the substrate site. Glu112 (proton acceptor) is an active-site residue. Lys130 is a substrate binding site.

The protein belongs to the ribose 5-phosphate isomerase family. As to quaternary structure, homodimer.

It carries out the reaction aldehydo-D-ribose 5-phosphate = D-ribulose 5-phosphate. It functions in the pathway carbohydrate degradation; pentose phosphate pathway; D-ribose 5-phosphate from D-ribulose 5-phosphate (non-oxidative stage): step 1/1. Its function is as follows. Catalyzes the reversible conversion of ribose-5-phosphate to ribulose 5-phosphate. This chain is Ribose-5-phosphate isomerase A, found in Nostoc sp. (strain PCC 7120 / SAG 25.82 / UTEX 2576).